The sequence spans 181 residues: Mating-type M-specific polypeptide Mc (181 aa).

The HMG box DNA-binding region spans 103-171 (TPRPPNAFIL…QHQKMYPGYK (69 aa)).

It is found in the nucleus. The protein localises to the cytoplasm. The protein resides in the cytoskeleton. It localises to the microtubule organizing center. Its subcellular location is the spindle pole body. Functionally, mating type proteins are sequence specific DNA-binding proteins that act as master switches in yeast differentiation by controlling gene expression in a cell type-specific fashion. Positive regulator of MFM genes. The HMG box recognizes the DNA sequence 5'-AACAAAG-3'. Required for conjugation and efficient meiosis. The polypeptide is Mating-type M-specific polypeptide Mc (mat3-Mc) (Schizosaccharomyces pombe (Fission yeast)).